The following is a 610-amino-acid chain: MRSNGCGDLREQNIDQQVQLCGWVDRRRDHGGVIFIDLRDRSGTVQIKVDPDLGAEAFAVAEHLRSETVLQVAGKVRARPGESLNDKLATGAVEVLASGIIVLNNVKGNLPFPVSVHDEENTREELRLRHRYLDLRRKRMNDNLRLRAQTIQAARRFLEDEGFIEVETPVLTRSTPEGARDYVLPSRVCGGEWFALPQSPQLFKQLLMVGGIERYYQVARCFRDEDLRADRQPEFTQLDIEMSFMDQEEILQLNESLICSIWKAVKGIDLPRPFPRMTWHDAMERYGTDRPDTRYGMELTNVSDIVKDMGFKVFSGAVKSGGAVKCIAVPGGNDALSNVRIKPGGDVFSEAQKAGAGGLAFIRVRNGCEIDSIGAIKDNLSDEQKQELLSRTGAEPGTLLLFGAGDTATVNKALDRVRQYLAKELGMVKADQDNDQWNFLWVVDFPMFEFNSEENRYEALHHPFCAPNAEDLSSDASQWADTLPGARAQAYDLVLNGLELGGGSLRIHDSALQRQVLQTVGLPLEEAQEQFGFLMDALDVGAPPHGGLAFGVDRMVMLLAGEESIRDTIAFPKTQQARCLMTNAPGGVADKQLEELHVASTWVDPSGEDD.

Glu177 is a binding site for L-aspartate. The interval 201 to 204 is aspartate; the sequence is QLFK. An L-aspartate-binding site is contributed by Arg223. Residues 223-225 and Gln232 each bind ATP; that span reads RDE. L-aspartate is bound at residue His461. Glu499 provides a ligand contact to ATP. An L-aspartate-binding site is contributed by Arg506. 551-554 provides a ligand contact to ATP; the sequence is GVDR.

Belongs to the class-II aminoacyl-tRNA synthetase family. Type 1 subfamily. In terms of assembly, homodimer.

It is found in the cytoplasm. It carries out the reaction tRNA(Asx) + L-aspartate + ATP = L-aspartyl-tRNA(Asx) + AMP + diphosphate. Aspartyl-tRNA synthetase with relaxed tRNA specificity since it is able to aspartylate not only its cognate tRNA(Asp) but also tRNA(Asn). Reaction proceeds in two steps: L-aspartate is first activated by ATP to form Asp-AMP and then transferred to the acceptor end of tRNA(Asp/Asn). The polypeptide is Aspartate--tRNA(Asp/Asn) ligase (Parasynechococcus marenigrum (strain WH8102)).